The following is a 61-amino-acid chain: Large ribosomal subunit protein uL30 (61 aa).

Belongs to the universal ribosomal protein uL30 family. As to quaternary structure, part of the 50S ribosomal subunit.

The sequence is that of Large ribosomal subunit protein uL30 from Corynebacterium urealyticum (strain ATCC 43042 / DSM 7109).